Reading from the N-terminus, the 486-residue chain is MLKHKTFINRISHSIKHYLSFHVSIANLKKISFFISLFSCLTSGSIMLFSLFSSSLHELYGINYLHINFIASLSAIGMYLCLPVLGYLADCYGPSLLSLISIWFFVPSYFVNSQVIKSLEYNNVMKIHLYAFGICFFFIGLATSSLYFSSLLTCAKIYPEHKGLAISLPVTCYGLSTLLGSQLMKLSYFKQYNGFLNLHKVFNFFGVLYLVMGILNFVSSSVVSMESEIIFTNEDEMEEADEESPLMTSRSRHSHHSCEDDDNLIPERSIIEPLKHQERFINFLKDKSAWLLLASLILNIGPMESFQNNLGSIIINSNSESNLSDQVSIMAASSTVTRLAMGGLSDYLSSSKRKFPICRVNLLIINLAIGIVGQFMVTRSTRFSIVSILNGSSYGGLFTIYPTIVASIWGIDMMGSTWGSFMIAPAIGSIGFSIFYGNEVDNKCGVDYSSCLQHYFNLTAVGLSVSLILIIIVWKGIWAKRGYRVF.

Transmembrane regions (helical) follow at residues 31–51 (ISFFISLFSCLTSGSIMLFSL), 69–89 (FIASLSAIGMYLCLPVLGYLA), 91–111 (CYGPSLLSLISIWFFVPSYFV), 132–152 (FGICFFFIGLATSSLYFSSLL), 164–184 (LAISLPVTCYGLSTLLGSQLM), and 204–224 (FFGVLYLVMGILNFVSSSVVS). The disordered stretch occupies residues 236–260 (EMEEADEESPLMTSRSRHSHHSCED). Residues 280-300 (FINFLKDKSAWLLLASLILNI) traverse the membrane as a helical segment. Asn-322 carries N-linked (GlcNAc...) asparagine glycosylation. Transmembrane regions (helical) follow at residues 327-348 (VSIMAASSTVTRLAMGGLSDYL) and 357-377 (ICRVNLLIINLAIGIVGQFMV). Residue Asn-390 is glycosylated (N-linked (GlcNAc...) asparagine). 2 helical membrane-spanning segments follow: residues 395-415 (GGLFTIYPTIVASIWGIDMMG) and 417-437 (TWGSFMIAPAIGSIGFSIFYG). A glycan (N-linked (GlcNAc...) asparagine) is linked at Asn-457. Residues 458-478 (LTAVGLSVSLILIIIVWKGIW) form a helical membrane-spanning segment.

Belongs to the major facilitator superfamily.

The protein resides in the vacuole membrane. Its function is as follows. Probable transporter. In Debaryomyces hansenii (strain ATCC 36239 / CBS 767 / BCRC 21394 / JCM 1990 / NBRC 0083 / IGC 2968) (Yeast), this protein is Probable transporter MCH1 (MCH1).